The sequence spans 120 residues: MSYRKLGRTSAQRKAMLRDLTTDLIINERIETTEARAKELRSVVEKMITLGKRGDLHARRQAAAYIRNEVADAEKNQDALQKLFSDVAPRYEERQGGYTRIMKLGPRRGDGAPMAIIELV.

Belongs to the bacterial ribosomal protein bL17 family. In terms of assembly, part of the 50S ribosomal subunit. Contacts protein L32.

The protein is Large ribosomal subunit protein bL17 of Bacillus licheniformis (strain ATCC 14580 / DSM 13 / JCM 2505 / CCUG 7422 / NBRC 12200 / NCIMB 9375 / NCTC 10341 / NRRL NRS-1264 / Gibson 46).